Here is a 140-residue protein sequence, read N- to C-terminus: Sec-independent protein translocase protein TatB (140 aa).

Residues 2–22 (LPGIGFSELLLIGLAALIIIG) form a helical membrane-spanning segment. Positions 90–140 (VNSAVMREHPVSPPPPATPPAPPAELPPEAAPHADSQNAPPEADPAKGDRT) are disordered. Residues 100-119 (VSPPPPATPPAPPAELPPEA) are compositionally biased toward pro residues.

The protein belongs to the TatB family. The Tat system comprises two distinct complexes: a TatABC complex, containing multiple copies of TatA, TatB and TatC subunits, and a separate TatA complex, containing only TatA subunits. Substrates initially bind to the TatABC complex, which probably triggers association of the separate TatA complex to form the active translocon.

The protein resides in the cell inner membrane. Part of the twin-arginine translocation (Tat) system that transports large folded proteins containing a characteristic twin-arginine motif in their signal peptide across membranes. Together with TatC, TatB is part of a receptor directly interacting with Tat signal peptides. TatB may form an oligomeric binding site that transiently accommodates folded Tat precursor proteins before their translocation. This is Sec-independent protein translocase protein TatB from Hyphomonas neptunium (strain ATCC 15444).